The sequence spans 277 residues: F41 fimbrial protein (277 aa).

An N-terminal signal peptide occupies residues M1–A22.

The protein belongs to the fimbrial K88 protein family.

Its subcellular location is the fimbrium. Fimbriae (also called pili), polar filaments radiating from the surface of the bacterium to a length of 0.5-1.5 micrometers and numbering 100-300 per cell, enable bacteria to colonize the epithelium of specific host organs. The polypeptide is F41 fimbrial protein (FimF41a) (Escherichia coli).